The following is a 224-amino-acid chain: Probable molybdenum cofactor guanylyltransferase (224 aa).

Residues 20–22 (LAG), Lys-33, Asp-88, and Asp-117 each bind GTP. Asp-117 is a binding site for Mg(2+).

This sequence belongs to the MobA family. It depends on Mg(2+) as a cofactor.

It is found in the cytoplasm. It carries out the reaction Mo-molybdopterin + GTP + H(+) = Mo-molybdopterin guanine dinucleotide + diphosphate. Functionally, transfers a GMP moiety from GTP to Mo-molybdopterin (Mo-MPT) cofactor (Moco or molybdenum cofactor) to form Mo-molybdopterin guanine dinucleotide (Mo-MGD) cofactor. The protein is Probable molybdenum cofactor guanylyltransferase of Methanosarcina mazei (strain ATCC BAA-159 / DSM 3647 / Goe1 / Go1 / JCM 11833 / OCM 88) (Methanosarcina frisia).